The sequence spans 156 residues: Small ribosomal subunit protein uS7 (156 aa).

Belongs to the universal ribosomal protein uS7 family. Part of the 30S ribosomal subunit. Contacts proteins S9 and S11.

Functionally, one of the primary rRNA binding proteins, it binds directly to 16S rRNA where it nucleates assembly of the head domain of the 30S subunit. Is located at the subunit interface close to the decoding center, probably blocks exit of the E-site tRNA. The protein is Small ribosomal subunit protein uS7 of Bacillus cytotoxicus (strain DSM 22905 / CIP 110041 / 391-98 / NVH 391-98).